The primary structure comprises 146 residues: Envelope protein OPG155 (146 aa).

A helical; Signal-anchor for type III membrane protein membrane pass occupies residues methionine 1–isoleucine 21. Residues glutamine 22 to leucine 146 lie on the Intravirion side of the membrane.

It belongs to the orthopoxvirus OPG155 protein family. As to quaternary structure, part of a stable entry-fusion complex (EFC) which is at least composed of proteins OPG143, OPG147, OPG155, OPG086, OPG094, OPG107, OPG104, and OPG099. Formation of the viral membrane is necessary for the assembly of the complex. Interacts directly with protein OPG107. Contains two intramolecular disulfide bonds. They are created by the viral disulfide bond formation pathway, a poxvirus-specific pathway that operates on the cytoplasmic side of the MV membranes.

The protein resides in the virion membrane. Functionally, envelope protein required for virus entry into host cell and for cell-cell fusion (syncytium formation). The protein is Envelope protein OPG155 (OPG155) of Variola virus (isolate Human/India/Ind3/1967) (VARV).